The primary structure comprises 775 residues: Armadillo-like helical domain-containing protein 4 (775 aa).

The N-terminal stretch at 1 to 47 (MLQDSITGIVNSFNLFFPSTMSRPTLMPTCVAFCSILFLTLATGCQA) is a signal peptide. The Extracellular segment spans residues 48–715 (FPKVERRETA…KDKAGYMSGM (668 aa)). A glycan (N-linked (GlcNAc...) asparagine) is linked at Asn-76. Disordered stretches follow at residues 120–148 (AGLL…PGPS), 247–273 (VPGV…DGQS), and 324–366 (KFES…PSST). Residues 129–142 (GVYSSSEPVVSASE) are compositionally biased toward polar residues. Over residues 324–335 (KFESISRGRPPE) the composition is skewed to basic and acidic residues. Asn-476 carries N-linked (GlcNAc...) asparagine glycosylation. Residues 559-669 (IPVLGSPMAP…PGITSQEPDI (111 aa)) are disordered. A compositionally biased stretch (polar residues) spans 577–599 (TISSALPSEGRTSPSISRPNTAA). Residues 606–640 (LESEEVEDDEDEEDEEDEEEEEEDEEDEEDEEDKE) are compositionally biased toward acidic residues. A helical transmembrane segment spans residues 716–736 (LVPVGVGIAGALFILGALYSI). Residues 737–775 (KVMNRRRRNGFKRHKRKQREFNSMQDRVMLLADSSEDEF) lie on the Cytoplasmic side of the membrane. 2 positions are modified to phosphoserine: Ser-770 and Ser-771.

Interacts with IL6ST; this interaction prevents IL6ST protein homodimerization and bridges ARMH4 with IL6R and STAT3 and therefore inhibits phosphorylation of STAT3 at 'Tyr-705'. Interacts (via cytoplasmic tail) with RICTOR; this interaction bridges ARMH4 to the mTORC2 complex and inhibits the mTORC2 kinase activity. In terms of tissue distribution, expressed in bone-marroew cells.

The protein localises to the membrane. Its function is as follows. May modulate immune response and may play a role in inflammation. Down-modulates STAT3 signaling throught direct interaction with IL6ST, resulting in the inhibition of phosphorylation of STAT3 at 'Tyr-705'. May negatively regulates AKT signaling by modulating the activity of mTORC2 complex through RICTOR interaction. The protein is Armadillo-like helical domain-containing protein 4 of Mus musculus (Mouse).